Here is a 242-residue protein sequence, read N- to C-terminus: Ubiquinone biosynthesis O-methyltransferase (242 aa).

S-adenosyl-L-methionine contacts are provided by R44, G64, D85, and M129.

This sequence belongs to the methyltransferase superfamily. UbiG/COQ3 family.

The catalysed reaction is a 3-demethylubiquinol + S-adenosyl-L-methionine = a ubiquinol + S-adenosyl-L-homocysteine + H(+). It carries out the reaction a 3-(all-trans-polyprenyl)benzene-1,2-diol + S-adenosyl-L-methionine = a 2-methoxy-6-(all-trans-polyprenyl)phenol + S-adenosyl-L-homocysteine + H(+). Its pathway is cofactor biosynthesis; ubiquinone biosynthesis. Functionally, O-methyltransferase that catalyzes the 2 O-methylation steps in the ubiquinone biosynthetic pathway. The sequence is that of Ubiquinone biosynthesis O-methyltransferase from Salmonella arizonae (strain ATCC BAA-731 / CDC346-86 / RSK2980).